The primary structure comprises 222 residues: 23kDa protein (222 aa).

A compositionally biased stretch (polar residues) spans 1-12 (MEPHDQSGSTTR). The disordered stretch occupies residues 1-21 (MEPHDQSGSTTRQLDEIRDRR).

May act as a regulatory factor during viral transcription. In Indian citrus ringspot virus (isolate Kinnow mandarin/India/K1/1996) (ICRSV), this protein is 23kDa protein.